Here is a 125-residue protein sequence, read N- to C-terminus: Bublin coiled-coil protein (125 aa).

A coiled-coil region spans residues 46 to 95 (IRKLDTQLDHLNDYMSKMEERLKAHNDRMMETLKQQKEEREKRRRSFHER). The disordered stretch occupies residues 79-125 (KQQKEEREKRRRSFHERMSQNQSEDEEFKKQMSSILKRVQSVKRTEK).

In terms of tissue distribution, expressed in many epithelial tissues, including the pharynx, intestine, excretory canal and hypodermis.

The protein localises to the cell junction. The protein resides in the cytoplasm. It is found in the cytoskeleton. Its function is as follows. Dynamic component of the endotube in intestinal cells, interacts with intermediate filament and regulates intestinal lumen morphology. This Caenorhabditis elegans protein is Bublin coiled-coil protein.